Here is a 151-residue protein sequence, read N- to C-terminus: Small ribosomal subunit protein uS15 (151 aa).

Lysine 27 is subject to N6-acetyllysine; alternate. Residue lysine 27 is modified to N6-succinyllysine; alternate. Lysine 27 is covalently cross-linked (Glycyl lysine isopeptide (Lys-Gly) (interchain with G-Cter in ubiquitin)). Serine 30 carries the post-translational modification Phosphoserine. Residue lysine 34 is modified to N6-succinyllysine. Residue tyrosine 38 is modified to Phosphotyrosine. Residue lysine 43 forms a Glycyl lysine isopeptide (Lys-Gly) (interchain with G-Cter in SUMO2) linkage.

This sequence belongs to the universal ribosomal protein uS15 family. Component of the small ribosomal subunit. Part of the small subunit (SSU) processome, composed of more than 70 proteins and the RNA chaperone small nucleolar RNA (snoRNA) U3. Post-translationally, ubiquitinated at Lys-27 by RNF14 and RNF25 in response to ribosome collisions (ribosome stalling).

Its subcellular location is the cytoplasm. It localises to the nucleus. The protein resides in the nucleolus. Functionally, component of the small ribosomal subunit. The ribosome is a large ribonucleoprotein complex responsible for the synthesis of proteins in the cell. Part of the small subunit (SSU) processome, first precursor of the small eukaryotic ribosomal subunit. During the assembly of the SSU processome in the nucleolus, many ribosome biogenesis factors, an RNA chaperone and ribosomal proteins associate with the nascent pre-rRNA and work in concert to generate RNA folding, modifications, rearrangements and cleavage as well as targeted degradation of pre-ribosomal RNA by the RNA exosome. This Cricetulus griseus (Chinese hamster) protein is Small ribosomal subunit protein uS15 (RPS13).